The sequence spans 377 residues: Putative F-box only protein 10 (377 aa).

One can recognise an F-box domain in the interval 1–46 (MVSVNLPWELVEEILYRVPPQSLARFRTVCKQWNSLFDDNKFVNDH).

The protein is Putative F-box only protein 10 (FBX10) of Arabidopsis thaliana (Mouse-ear cress).